The sequence spans 298 residues: tRNA dimethylallyltransferase (298 aa).

Residue 12-19 (GPTASGKT) participates in ATP binding. A substrate-binding site is contributed by 14 to 19 (TASGKT). The interaction with substrate tRNA stretch occupies residues 37-40 (DSRQ).

This sequence belongs to the IPP transferase family. Monomer. Requires Mg(2+) as cofactor.

The catalysed reaction is adenosine(37) in tRNA + dimethylallyl diphosphate = N(6)-dimethylallyladenosine(37) in tRNA + diphosphate. Catalyzes the transfer of a dimethylallyl group onto the adenine at position 37 in tRNAs that read codons beginning with uridine, leading to the formation of N6-(dimethylallyl)adenosine (i(6)A). The polypeptide is tRNA dimethylallyltransferase (Synechococcus sp. (strain CC9902)).